Reading from the N-terminus, the 344-residue chain is N-acetyl-gamma-glutamyl-phosphate reductase 1 (344 aa).

The active site involves C150.

The protein belongs to the NAGSA dehydrogenase family. Type 1 subfamily.

It localises to the cytoplasm. It carries out the reaction N-acetyl-L-glutamate 5-semialdehyde + phosphate + NADP(+) = N-acetyl-L-glutamyl 5-phosphate + NADPH + H(+). Its pathway is amino-acid biosynthesis; L-arginine biosynthesis; N(2)-acetyl-L-ornithine from L-glutamate: step 3/4. Catalyzes the NADPH-dependent reduction of N-acetyl-5-glutamyl phosphate to yield N-acetyl-L-glutamate 5-semialdehyde. The chain is N-acetyl-gamma-glutamyl-phosphate reductase 1 from Pseudomonas putida (strain ATCC 47054 / DSM 6125 / CFBP 8728 / NCIMB 11950 / KT2440).